Reading from the N-terminus, the 72-residue chain is uncharacterized protein (72 aa).

Residues 23-45 (ITNLLITTILLCFFNATTYWKLF) form a helical membrane-spanning segment.

Its subcellular location is the membrane. This is an uncharacterized protein from Schizosaccharomyces pombe (strain 972 / ATCC 24843) (Fission yeast).